The following is a 543-amino-acid chain: Carboxypeptidase Y homolog A (543 aa).

An N-terminal signal peptide occupies residues M1–A17. A propeptide spanning residues Q18–K124 is cleaved from the precursor. Cystine bridges form between C179–C419, C313–C327, C337–C360, C344–C353, and C382–C389. N210 is a glycosylation site (N-linked (GlcNAc...) asparagine). Residue S266 is part of the active site. Residue D458 is part of the active site. An N-linked (GlcNAc...) asparagine glycan is attached at N509. H520 is a catalytic residue.

This sequence belongs to the peptidase S10 family.

The protein localises to the vacuole. It carries out the reaction Release of a C-terminal amino acid with broad specificity.. Vacuolar carboxypeptidase involved in degradation of small peptides. Digests preferentially peptides containing an aliphatic or hydrophobic residue in P1' position, as well as methionine, leucine or phenylalanine in P1 position of ester substrate. This chain is Carboxypeptidase Y homolog A (CPYA), found in Trichophyton equinum (Horse ringworm fungus).